We begin with the raw amino-acid sequence, 374 residues long: Peptidoglycan recognition protein 4 (374 aa).

The first 20 residues, 1 to 20, serve as a signal peptide directing secretion; that stretch reads MLSWLLVFSILVLLAQGVSS. N39, N93, and N146 each carry an N-linked (GlcNAc...) asparagine glycan. N-acetylmuramoyl-L-alanine amidase domains lie at 76 to 212 and 233 to 359; these read RPVD…KACP and PAKY…LSPG. 3 disulfides stabilise this stretch: C211–C333, C227–C271, and C247–C253. Y275 contributes to the peptidoglycan binding site. 2 interaction with murein regions span residues 294–303 and 354–355; these read QGSKTDSYND and NT.

This sequence belongs to the N-acetylmuramoyl-L-alanine amidase 2 family. Homodimer; disulfide-linked. Heterodimer with PGLYRP3; disulfide-linked. As to expression, ubiquitous.

The protein localises to the secreted. Functionally, pattern receptor that binds to murein peptidoglycans (PGN) of Gram-positive bacteria. Has bactericidal activity towards Gram-positive bacteria. May kill Gram-positive bacteria by interfering with peptidoglycan biosynthesis. Also binds to Gram-negative bacteria, and has bacteriostatic activity towards Gram-negative bacteria. Plays a role in innate immunity. This Mus musculus (Mouse) protein is Peptidoglycan recognition protein 4 (Pglyrp4).